The chain runs to 128 residues: Protein C10 (128 aa).

It belongs to the UPF0456 family.

It localises to the cytoplasm. The sequence is that of Protein C10 from Xenopus tropicalis (Western clawed frog).